A 69-amino-acid polypeptide reads, in one-letter code: Large ribosomal subunit protein uL29 (69 aa).

Belongs to the universal ribosomal protein uL29 family.

This chain is Large ribosomal subunit protein uL29, found in Clostridium perfringens (strain ATCC 13124 / DSM 756 / JCM 1290 / NCIMB 6125 / NCTC 8237 / Type A).